A 265-amino-acid polypeptide reads, in one-letter code: MNNLYRDLAPVTEAAWAEIELEAARTFKRHIAGRRVVDVSDPGGPVTAAVSTGRLIDVKAPTNGVIAHLRASKPLVRLRVPFTLSRNEIDDVERGSKDSDWEPVKEAAKKLAFVEDRTIFEGYSAASIEGIRSASSNPALTLPEDPREIPDVISQALSELRLAGVDGPYSVLLSADVYTKVSETSDHGYPIREHLNRLVDGDIIWAPAIDGAFVLTTRGGDFDLQLGTDVAIGYASHDTDTVRLYLQETLTFLCYTAEASVALSH.

This sequence belongs to the encapsulin family. Family 1 subfamily. As to quaternary structure, multimeric. The encapsulin nanocompartment is formed by 60 subunits. Monomers form pentamers which assemble to form shells. There are 12 pores where the pentamers meet as well as 3-fold axis channels and dimer channels; none are larger than 3-4 Angstroms in diameter. The N-terminus of the protein is inside the shell, the C-terminus is outside. In terms of processing, the initiator methionine is partially removed. When isolated from culture filtrate isoelectric focusing gives 3 bands, none of which are glycosylated.

Its subcellular location is the encapsulin nanocompartment. It localises to the secreted. It is found in the cell membrane. In terms of biological role, shell component of a type 1 encapsulin nanocompartment in situ; its cargo protects against oxidative stress at low pH. In situ and in E.coli assembles into proteinaceous shells about 22 nm in diameter with 2.5 nm thick walls. Cargo proteins are targeted to the interior via their C-terminal extensions; empty intact shells can be isolated in E.coli in the absence of cargo protein. There are at least 4 possible cargo proteins, DyP (encoded in the same locus), FolB, BfrB and Rv1762c; DyP and Rv1762c have been identified in vivo. Probably involved in protection against oxidative damage from the host immune response. A T-cell antigen found in bacterial culture cell filtrates, stimulates mouse immune response. Does not have detectable bacteriocin activity. This chain is Type 1 encapsulin shell protein, found in Mycobacterium tuberculosis (strain ATCC 25618 / H37Rv).